The sequence spans 340 residues: Alcohol dehydrogenase patD (340 aa).

Cysteine 46 lines the Zn(2+) pocket. Histidine 47 provides a ligand contact to NAD(+). Zn(2+)-binding residues include histidine 67, glutamate 68, cysteine 101, cysteine 104, cysteine 112, and cysteine 154. Substrate is bound at residue histidine 67. NAD(+) contacts are provided by residues 178–183, 198–203, lysine 206, 265–267, 289–291, and 297–299; these read GLGGLG, VALSRD, LSI, PSG, and EDA.

It belongs to the zinc-containing alcohol dehydrogenase family. Zn(2+) serves as cofactor.

The protein localises to the cytoplasm. It is found in the cytosol. It carries out the reaction neopatulin + NADPH + H(+) = (E)-ascladiol + NADP(+). It functions in the pathway mycotoxin biosynthesis; patulin biosynthesis. In terms of biological role, alcohol dehydrogenase; part of the gene cluster that mediates the biosynthesis of patulin, an acetate-derived tetraketide mycotoxin produced by several fungal species that shows antimicrobial properties against several bacteria. PatD catalyzes the conversion of neopatulin into E-ascladiol. The pathway begins with the synthesis of 6-methylsalicylic acid by the polyketide synthase (PKS) patK via condensation of acetate and malonate units. The 6-methylsalicylic acid decarboxylase patG then catalyzes the decarboxylation of 6-methylsalicylic acid to yield m-cresol (also known as 3-methylphenol). These first reactions occur in the cytosol. The intermediate m-cresol is then transported into the endoplasmic reticulum where the cytochrome P450 monooxygenase patH converts it to m-hydroxybenzyl alcohol, which is further converted to gentisyl alcohol by the cytochrome P450 monooxygenase patI. The oxidoreductases patJ and patO further convert gentisyl alcohol to isoepoxydon in the vacuole. PatN catalyzes then the transformation of isoepoxydon into phyllostine. The cluster protein patF is responsible for the conversion from phyllostine to neopatulin whereas the alcohol dehydrogenase patD converts neopatulin to E-ascladiol. The steps between isoepoxydon and E-ascladiol occur in the cytosol, and E-ascladiol is probably secreted to the extracellular space by one of the cluster-specific transporters patC or patM. Finally, the secreted patulin synthase patE catalyzes the conversion of E-ascladiol to patulin. This Penicillium expansum (Blue mold rot fungus) protein is Alcohol dehydrogenase patD.